The following is a 339-amino-acid chain: Alcohol dehydrogenase notN (339 aa).

Cys-44, His-65, Glu-66, Cys-99, Cys-102, Cys-110, and Cys-152 together coordinate Zn(2+). His-65 contributes to the an alcohol binding site. Residues 176–181 (GLGGLG), 196–201 (VAISRG), Lys-204, 263–265 (LSF), 287–289 (PSG), and 295–297 (EDA) each bind NAD(+).

The protein belongs to the zinc-containing alcohol dehydrogenase family. Zn(2+) serves as cofactor.

The catalysed reaction is a primary alcohol + NAD(+) = an aldehyde + NADH + H(+). The enzyme catalyses a secondary alcohol + NAD(+) = a ketone + NADH + H(+). Functionally, alcohol dehydrogenase; part of the gene cluster that mediates the biosynthesis of notoamide, a fungal indole alkaloid that belongs to a family of natural products containing a characteristic bicyclo[2.2.2]diazaoctane core. The first step of notoamide biosynthesis involves coupling of L-proline and L-tryptophan by the bimodular NRPS notE, to produce cyclo-L-tryptophan-L-proline called brevianamide F. The reverse prenyltransferase notF then acts as a deoxybrevianamide E synthase and converts brevianamide F to deoxybrevianamide E via reverse prenylation at C-2 of the indole ring leading to the bicyclo[2.2.2]diazaoctane core. Deoxybrevianamide E is further hydroxylated at C-6 of the indole ring, likely catalyzed by the cytochrome P450 monooxygenase notG, to yield 6-hydroxy-deoxybrevianamide E. 6-hydroxy-deoxybrevianamide E is a specific substrate of the prenyltransferase notC for normal prenylation at C-7 to produce 6-hydroxy-7-prenyl-deoxybrevianamide, also called notoamide S. As the proposed pivotal branching point in notoamide biosynthesis, notoamide S can be diverted to notoamide E through an oxidative pyran ring closure putatively catalyzed by either notH cytochrome P450 monooxygenase or the notD FAD-linked oxidoreductase. This step would be followed by an indole 2,3-epoxidation-initiated pinacol-like rearrangement catalyzed by the notB FAD-dependent monooxygenase leading to the formation of notoamide C and notoamide D. On the other hand notoamide S is converted to notoamide T by notH (or notD), a bifunctional oxidase that also functions as the intramolecular Diels-Alderase responsible for generation of (+)-notoamide T. To generate antipodal (-)-notoaminide T, notH' (or notD') in Aspergillus versicolor is expected to catalyze a Diels-Alder reaction leading to the opposite stereochemistry. The remaining oxidoreductase notD (or notH) likely catalyzes the oxidative pyran ring formation to yield (+)-stephacidin A. The FAD-dependent monooxygenase notI is highly similar to notB and is predicted to catalyze a similar conversion from (+)-stephacidin A to (-)-notoamide B via the 2,3-epoxidation of (+)-stephacidin A followed by a pinacol-type rearrangement. Finally, it remains unclear which enzyme could be responsible for the final hydroxylation steps leading to notoamide A and sclerotiamide. The function of notN in the notoamide biosynthesis has not been determined yet. The protein is Alcohol dehydrogenase notN of Aspergillus sp. (strain MF297-2).